We begin with the raw amino-acid sequence, 167 residues long: uncharacterized protein (167 aa).

This is an uncharacterized protein from Homo sapiens (Human).